Here is a 254-residue protein sequence, read N- to C-terminus: Sulfoacetaldehyde reductase (254 aa).

Phe-8–Val-32 lines the NADP(+) pocket. Ser-141 contributes to the substrate binding site. Tyr-154 (proton acceptor) is an active-site residue.

The protein belongs to the short-chain dehydrogenases/reductases (SDR) family. In terms of assembly, homodimer and heterotetramer.

It catalyses the reaction 2-hydroxyethane-1-sulfonate + NADP(+) = sulfoacetaldehyde + NADPH + H(+). It functions in the pathway organosulfur degradation. In terms of biological role, catalyzes the formation of isethionate from 2-sulfoacetaldehyde in the deaminative pathway of taurine. The enzyme is specific for NADPH; NADH is not a substrate. This is Sulfoacetaldehyde reductase (isfD) from Klebsiella oxytoca.